Consider the following 129-residue polypeptide: MARKTNTRKKRVKKNIEAGIAHIRSTFNNTIVTLTDTHGNALSWSSAGALGFRGSRKSTPFAAQMAAETAAKAAMEHGLKTLEVTVKGPGAGREAAIRALQAAGLEVTAIRDVTPVPHNGCRPPKRRRV.

Belongs to the universal ribosomal protein uS11 family. As to quaternary structure, part of the 30S ribosomal subunit. Interacts with proteins S7 and S18. Binds to IF-3.

In terms of biological role, located on the platform of the 30S subunit, it bridges several disparate RNA helices of the 16S rRNA. Forms part of the Shine-Dalgarno cleft in the 70S ribosome. This chain is Small ribosomal subunit protein uS11, found in Bacillus cereus (strain ATCC 14579 / DSM 31 / CCUG 7414 / JCM 2152 / NBRC 15305 / NCIMB 9373 / NCTC 2599 / NRRL B-3711).